The sequence spans 224 residues: UPF0758 protein Psyr_0222 (224 aa).

The 123-residue stretch at 102–224 (ALENPTQVRS…PLSMVERGLM (123 aa)) folds into the MPN domain. Zn(2+)-binding residues include H173, H175, and D186. Positions 173–186 (HNHPSGITTPSRSD) match the JAMM motif motif.

It belongs to the UPF0758 family.

This chain is UPF0758 protein Psyr_0222, found in Pseudomonas syringae pv. syringae (strain B728a).